A 286-amino-acid polypeptide reads, in one-letter code: B3 domain-containing protein REM11 (286 aa).

A DNA-binding region (TF-B3 1) is located at residues 1-70 (MAWNLAIITL…TPMLSLVSTQ (70 aa)). Positions 68-114 (STQSTSHKSQKRECSKHSEKESISAVPSKGKKNRKARSNREERRDSS) are disordered. Residues 78-89 (KRECSKHSEKES) are compositionally biased toward basic and acidic residues. A DNA-binding region (TF-B3 2) is located at residues 119 to 219 (NRFVTFTPED…RAQVCFYGVF (101 aa)).

The protein localises to the nucleus. The sequence is that of B3 domain-containing protein REM11 (REM11) from Arabidopsis thaliana (Mouse-ear cress).